The sequence spans 431 residues: UDP-N-acetylmuramate--L-alanine ligase (431 aa).

108 to 114 (GAHGKST) contributes to the ATP binding site.

Belongs to the MurCDEF family.

Its subcellular location is the cytoplasm. It carries out the reaction UDP-N-acetyl-alpha-D-muramate + L-alanine + ATP = UDP-N-acetyl-alpha-D-muramoyl-L-alanine + ADP + phosphate + H(+). It functions in the pathway cell wall biogenesis; peptidoglycan biosynthesis. In terms of biological role, cell wall formation. This Campylobacter jejuni (strain RM1221) protein is UDP-N-acetylmuramate--L-alanine ligase.